Reading from the N-terminus, the 393-residue chain is 1-deoxy-D-xylulose 5-phosphate reductoisomerase (393 aa).

5 residues coordinate NADPH: Thr-13, Gly-14, Ser-15, Ile-16, and Asn-128. Lys-129 serves as a coordination point for 1-deoxy-D-xylulose 5-phosphate. An NADPH-binding site is contributed by Glu-130. Asp-154 provides a ligand contact to Mn(2+). 1-deoxy-D-xylulose 5-phosphate contacts are provided by Ser-155, Glu-156, Ser-178, and His-201. Mn(2+) is bound at residue Glu-156. Gly-207 is a binding site for NADPH. Residues Ser-214, Asn-219, Lys-220, and Glu-223 each coordinate 1-deoxy-D-xylulose 5-phosphate. Position 223 (Glu-223) interacts with Mn(2+).

It belongs to the DXR family. Mg(2+) is required as a cofactor. It depends on Mn(2+) as a cofactor.

It catalyses the reaction 2-C-methyl-D-erythritol 4-phosphate + NADP(+) = 1-deoxy-D-xylulose 5-phosphate + NADPH + H(+). Its pathway is isoprenoid biosynthesis; isopentenyl diphosphate biosynthesis via DXP pathway; isopentenyl diphosphate from 1-deoxy-D-xylulose 5-phosphate: step 1/6. Its function is as follows. Catalyzes the NADPH-dependent rearrangement and reduction of 1-deoxy-D-xylulose-5-phosphate (DXP) to 2-C-methyl-D-erythritol 4-phosphate (MEP). This Acidithiobacillus ferrooxidans (strain ATCC 23270 / DSM 14882 / CIP 104768 / NCIMB 8455) (Ferrobacillus ferrooxidans (strain ATCC 23270)) protein is 1-deoxy-D-xylulose 5-phosphate reductoisomerase.